Here is a 405-residue protein sequence, read N- to C-terminus: 4-hydroxy-3-methylbut-2-en-1-yl diphosphate synthase (flavodoxin) (405 aa).

The [4Fe-4S] cluster site is built by Cys-297, Cys-300, Cys-343, and Glu-350.

Belongs to the IspG family. [4Fe-4S] cluster is required as a cofactor.

It carries out the reaction (2E)-4-hydroxy-3-methylbut-2-enyl diphosphate + oxidized [flavodoxin] + H2O + 2 H(+) = 2-C-methyl-D-erythritol 2,4-cyclic diphosphate + reduced [flavodoxin]. It participates in isoprenoid biosynthesis; isopentenyl diphosphate biosynthesis via DXP pathway; isopentenyl diphosphate from 1-deoxy-D-xylulose 5-phosphate: step 5/6. Functionally, converts 2C-methyl-D-erythritol 2,4-cyclodiphosphate (ME-2,4cPP) into 1-hydroxy-2-methyl-2-(E)-butenyl 4-diphosphate. The chain is 4-hydroxy-3-methylbut-2-en-1-yl diphosphate synthase (flavodoxin) from Francisella tularensis subsp. tularensis (strain FSC 198).